A 249-amino-acid polypeptide reads, in one-letter code: Spindlin-4 (249 aa).

Tudor-like domain stretches follow at residues 41-90 (VGCR…LELH), 119-168 (VGKA…YTLL), and 201-246 (VGKQ…YGLV). 3 histone H3K4me3 and H3R8me2a binding regions span residues 80–85 (GKDSVY), Glu-128, and 237–239 (DIH).

The protein belongs to the SPIN/STSY family. Interacts with C11orf84/SPINDOC. Associates with chromatin.

The protein resides in the cytoplasm. The protein localises to the nucleus. Binds to acetylated and methylated histones, including H3K4me3 and H4K20me3, probably acting as a histone reader that recognizes chromatin marks to mediate downstream cellular effects. Promotes canonical WNT signaling, and is involved in the down-regulation of cell proliferation. The polypeptide is Spindlin-4 (Spin4) (Mus musculus (Mouse)).